Reading from the N-terminus, the 131-residue chain is Snaclec alboaggregin-A subunit alpha (131 aa).

The 131-residue stretch at 1–131 folds into the C-type lectin domain; sequence DCPSDWSSYD…EYPFVCKFXR (131 aa). Disulfide bonds link cysteine 2–cysteine 13, cysteine 30–cysteine 127, and cysteine 102–cysteine 119.

The protein belongs to the snaclec family. Heterotetramer of the subunits alpha, alpha', beta and beta'; disulfide-linked. In terms of tissue distribution, expressed by the venom gland.

The protein resides in the secreted. Functionally, potent platelet activator that aggregates platelets via both GPIbalpha (GP1BA) and GPVI (GP6). Induces a tyrosine phosphorylation profile in platelets that resembles this produced by collagen, involving the time dependent tyrosine phosphorylation of Fc receptor gamma chain (FCGR1A), phospholipase Cgamma2 (PLCG2), and LAT. In Trimeresurus albolabris (White-lipped pit viper), this protein is Snaclec alboaggregin-A subunit alpha.